The sequence spans 640 residues: Phosphomethylpyrimidine synthase (640 aa).

Substrate is bound by residues N235, M264, Y293, H329, 349–351 (SRG), 390–393 (DGLR), and E429. H433 serves as a coordination point for Zn(2+). Y456 contributes to the substrate binding site. H497 contributes to the Zn(2+) binding site. 3 residues coordinate [4Fe-4S] cluster: C577, C580, and C585.

Belongs to the ThiC family. Homodimer. It depends on [4Fe-4S] cluster as a cofactor.

The enzyme catalyses 5-amino-1-(5-phospho-beta-D-ribosyl)imidazole + S-adenosyl-L-methionine = 4-amino-2-methyl-5-(phosphooxymethyl)pyrimidine + CO + 5'-deoxyadenosine + formate + L-methionine + 3 H(+). It participates in cofactor biosynthesis; thiamine diphosphate biosynthesis. Its function is as follows. Catalyzes the synthesis of the hydroxymethylpyrimidine phosphate (HMP-P) moiety of thiamine from aminoimidazole ribotide (AIR) in a radical S-adenosyl-L-methionine (SAM)-dependent reaction. This Photobacterium profundum (strain SS9) protein is Phosphomethylpyrimidine synthase.